The following is a 569-amino-acid chain: MKYYLYLFLLFTFANLLYSCPTYPLPIKIDQNDPLLLKAYNDIDLLIQSKMKADGVKSFVATIVYMDKVVFSKAYGKLNYLDINSPNLTLDHNFRISSVTKVFTSLMMFKLRDQGIINSLDDDIRDYFPKFKIKSIFKKKEEKFITFRQLASHQSGLSRETPCHRNEFGTSNCTEKIILAKLSKQFLISKPTTLSHYSNLGYSLLGRTLGESLRMKRMKEQEPYEYWVTNNIFKPLGMNNTTFNYEDIINNTAPGLVNNNGKYSIPSMTKSGWNSPGGGVFSTARDMGKLLIHLLGMNNNSLDIRSPSYLKESTLNELFSPSNLLNDGSASYGMPFLHSYSTNNSLWILSKNGDLQGYVSNIAFVKPYKLGLFFSSLTSVSSSDVYTNAAIDILIPVYKKLLEQAAIDSVINSTTTSSNSTTTTTTTTTTTTTTTNNTMESIFISKIPHSLLIGIYTNDYGNKFLILNQTTYGDYLNRLLVSYNGASLVLNKFELDNEYPYIKRISFYNESIPTCRTIASGSNDELIYFTFKDINGTIIDFNNNNNNQNIDINNLFVYSVQIMGSLLFK.

Residues 1–19 form the signal peptide; that stretch reads MKYYLYLFLLFTFANLLYS. N-linked (GlcNAc...) asparagine glycosylation is found at asparagine 87, asparagine 172, asparagine 239, asparagine 240, asparagine 250, asparagine 299, asparagine 343, asparagine 412, asparagine 419, asparagine 436, asparagine 468, asparagine 509, and asparagine 535.

It belongs to the beta-lactamase family.

Its subcellular location is the secreted. The protein is Beta-lactamase-like protein 4 of Dictyostelium discoideum (Social amoeba).